A 160-amino-acid polypeptide reads, in one-letter code: Transcription elongation factor GreA (160 aa).

The protein belongs to the GreA/GreB family.

Functionally, necessary for efficient RNA polymerase transcription elongation past template-encoded arresting sites. The arresting sites in DNA have the property of trapping a certain fraction of elongating RNA polymerases that pass through, resulting in locked ternary complexes. Cleavage of the nascent transcript by cleavage factors such as GreA or GreB allows the resumption of elongation from the new 3'terminus. GreA releases sequences of 2 to 3 nucleotides. This chain is Transcription elongation factor GreA, found in Leuconostoc citreum (strain KM20).